The primary structure comprises 98 residues: NADH-ubiquinone oxidoreductase chain 4L (98 aa).

Transmembrane regions (helical) follow at residues 1–21, 28–48, and 59–79; these read MMPI…GALV, STLL…ALLI, and APLI…ALLV.

Belongs to the complex I subunit 4L family. As to quaternary structure, core subunit of respiratory chain NADH dehydrogenase (Complex I) which is composed of 45 different subunits.

It is found in the mitochondrion inner membrane. The enzyme catalyses a ubiquinone + NADH + 5 H(+)(in) = a ubiquinol + NAD(+) + 4 H(+)(out). Its function is as follows. Core subunit of the mitochondrial membrane respiratory chain NADH dehydrogenase (Complex I) which catalyzes electron transfer from NADH through the respiratory chain, using ubiquinone as an electron acceptor. Part of the enzyme membrane arm which is embedded in the lipid bilayer and involved in proton translocation. The sequence is that of NADH-ubiquinone oxidoreductase chain 4L (MT-ND4L) from Distoechurus pennatus (Feather-tailed possum).